The primary structure comprises 537 residues: CTP synthase (537 aa).

Residues 1–265 form an amidoligase domain region; that stretch reads MVHFIFVTGG…DNKVLKFFNI (265 aa). CTP is bound at residue Ser13. UTP is bound at residue Ser13. Residues 14 to 19 and Asp71 each bind ATP; that span reads SLGKGL. Residues Asp71 and Glu139 each contribute to the Mg(2+) site. CTP contacts are provided by residues 146-148 and Lys222; that span reads DIE. Position 222 (Lys222) interacts with UTP. A Glutamine amidotransferase type-1 domain is found at 290-536; it reads RIAIIAKYHK…IKAAIEYNKC (247 aa). An L-glutamine-binding site is contributed by Gly352. The Nucleophile; for glutamine hydrolysis role is filled by Cys379. L-glutamine contacts are provided by residues 380–383, Glu403, and Arg464; that span reads FGMQ. Catalysis depends on residues His509 and Glu511.

Belongs to the CTP synthase family. Homotetramer.

It catalyses the reaction UTP + L-glutamine + ATP + H2O = CTP + L-glutamate + ADP + phosphate + 2 H(+). It carries out the reaction L-glutamine + H2O = L-glutamate + NH4(+). The catalysed reaction is UTP + NH4(+) + ATP = CTP + ADP + phosphate + 2 H(+). The protein operates within pyrimidine metabolism; CTP biosynthesis via de novo pathway; CTP from UDP: step 2/2. Its activity is regulated as follows. Allosterically activated by GTP, when glutamine is the substrate; GTP has no effect on the reaction when ammonia is the substrate. The allosteric effector GTP functions by stabilizing the protein conformation that binds the tetrahedral intermediate(s) formed during glutamine hydrolysis. Inhibited by the product CTP, via allosteric rather than competitive inhibition. Catalyzes the ATP-dependent amination of UTP to CTP with either L-glutamine or ammonia as the source of nitrogen. Regulates intracellular CTP levels through interactions with the four ribonucleotide triphosphates. This Rickettsia conorii (strain ATCC VR-613 / Malish 7) protein is CTP synthase.